A 256-amino-acid chain; its full sequence is Thiazole synthase (256 aa).

Lysine 95 functions as the Schiff-base intermediate with DXP in the catalytic mechanism. 1-deoxy-D-xylulose 5-phosphate is bound by residues glycine 156, 182-183 (AG), and 204-205 (NT).

Belongs to the ThiG family. In terms of assembly, homotetramer. Forms heterodimers with either ThiH or ThiS.

It is found in the cytoplasm. It carries out the reaction [ThiS sulfur-carrier protein]-C-terminal-Gly-aminoethanethioate + 2-iminoacetate + 1-deoxy-D-xylulose 5-phosphate = [ThiS sulfur-carrier protein]-C-terminal Gly-Gly + 2-[(2R,5Z)-2-carboxy-4-methylthiazol-5(2H)-ylidene]ethyl phosphate + 2 H2O + H(+). It participates in cofactor biosynthesis; thiamine diphosphate biosynthesis. Catalyzes the rearrangement of 1-deoxy-D-xylulose 5-phosphate (DXP) to produce the thiazole phosphate moiety of thiamine. Sulfur is provided by the thiocarboxylate moiety of the carrier protein ThiS. In vitro, sulfur can be provided by H(2)S. This Vibrio cholerae serotype O1 (strain ATCC 39541 / Classical Ogawa 395 / O395) protein is Thiazole synthase.